The sequence spans 174 residues: Crossover junction endodeoxyribonuclease RuvC (174 aa).

Residues aspartate 8, glutamate 67, and aspartate 139 contribute to the active site. Mg(2+) contacts are provided by aspartate 8, glutamate 67, and aspartate 139.

The protein belongs to the RuvC family. As to quaternary structure, homodimer which binds Holliday junction (HJ) DNA. The HJ becomes 2-fold symmetrical on binding to RuvC with unstacked arms; it has a different conformation from HJ DNA in complex with RuvA. In the full resolvosome a probable DNA-RuvA(4)-RuvB(12)-RuvC(2) complex forms which resolves the HJ. Requires Mg(2+) as cofactor.

The protein localises to the cytoplasm. It catalyses the reaction Endonucleolytic cleavage at a junction such as a reciprocal single-stranded crossover between two homologous DNA duplexes (Holliday junction).. Functionally, the RuvA-RuvB-RuvC complex processes Holliday junction (HJ) DNA during genetic recombination and DNA repair. Endonuclease that resolves HJ intermediates. Cleaves cruciform DNA by making single-stranded nicks across the HJ at symmetrical positions within the homologous arms, yielding a 5'-phosphate and a 3'-hydroxyl group; requires a central core of homology in the junction. The consensus cleavage sequence is 5'-(A/T)TT(C/G)-3'. Cleavage occurs on the 3'-side of the TT dinucleotide at the point of strand exchange. HJ branch migration catalyzed by RuvA-RuvB allows RuvC to scan DNA until it finds its consensus sequence, where it cleaves and resolves the cruciform DNA. This Ectopseudomonas mendocina (strain ymp) (Pseudomonas mendocina) protein is Crossover junction endodeoxyribonuclease RuvC.